We begin with the raw amino-acid sequence, 146 residues long: Snaclec anticoagulant protein subunit B (146 aa).

The N-terminal stretch at 1–23 (MGRFIFVSFGLLVLFLSLSGTAA) is a signal peptide. The 123-residue stretch at 24 to 146 (DCPSDWSSYE…IANFVCEFQA (123 aa)) folds into the C-type lectin domain. Disulfide bonds link cysteine 25/cysteine 36, cysteine 53/cysteine 142, and cysteine 119/cysteine 134. 3 residues coordinate Ca(2+): serine 64, glutamine 66, and glutamate 70. Glutamate 143 is a Ca(2+) binding site.

The protein belongs to the snaclec family. As to quaternary structure, heterodimer with subunit A of agkisacutacin or AaACP; disulfide-linked. In terms of tissue distribution, expressed by the venom gland.

The protein resides in the secreted. Anticoagulant protein which binds to the gamma-carboxyglutamic acid-domain regions of factors IX and factor X in the presence of calcium with a 1 to 1 stoichiometry. Also inhibits platelet aggregation by binding to platelet glycoprotein Ibalpha (GP1BA) and functioning as a blocker of vWF. Is devoid of hemorrhagic and lethal activities. Possesses antithrombotic and thrombolytic activities. Also hydrolyzes the Aalpha-chain of fibrinogen. Does not affect the Bbeta-chain and the gamma chain. In Deinagkistrodon acutus (Hundred-pace snake), this protein is Snaclec anticoagulant protein subunit B.